Reading from the N-terminus, the 497-residue chain is Proline--tRNA ligase (497 aa).

This sequence belongs to the class-II aminoacyl-tRNA synthetase family. ProS type 3 subfamily. As to quaternary structure, homodimer.

Its subcellular location is the cytoplasm. The enzyme catalyses tRNA(Pro) + L-proline + ATP = L-prolyl-tRNA(Pro) + AMP + diphosphate. Its function is as follows. Catalyzes the attachment of proline to tRNA(Pro) in a two-step reaction: proline is first activated by ATP to form Pro-AMP and then transferred to the acceptor end of tRNA(Pro). This Deinococcus geothermalis (strain DSM 11300 / CIP 105573 / AG-3a) protein is Proline--tRNA ligase.